The following is a 406-amino-acid chain: Tryptophan synthase beta chain (406 aa).

An N6-(pyridoxal phosphate)lysine modification is found at K99.

This sequence belongs to the TrpB family. Tetramer of two alpha and two beta chains. The cofactor is pyridoxal 5'-phosphate.

The enzyme catalyses (1S,2R)-1-C-(indol-3-yl)glycerol 3-phosphate + L-serine = D-glyceraldehyde 3-phosphate + L-tryptophan + H2O. It functions in the pathway amino-acid biosynthesis; L-tryptophan biosynthesis; L-tryptophan from chorismate: step 5/5. The beta subunit is responsible for the synthesis of L-tryptophan from indole and L-serine. The protein is Tryptophan synthase beta chain of Brucella canis (strain ATCC 23365 / NCTC 10854 / RM-666).